The chain runs to 200 residues: Interferon lambda-2 (200 aa).

A signal peptide spans 1–25 (MKLDMTGDCTPVLVLMAAVLTVTGA).

It belongs to the lambda interferon family.

It localises to the secreted. Functionally, cytokine with antiviral, antitumour and immunomodulatory activities. Plays a critical role in the antiviral host defense, predominantly in the epithelial tissues. Acts as a ligand for the heterodimeric class II cytokine receptor composed of IL10RB and IFNLR1, and receptor engagement leads to the activation of the JAK/STAT signaling pathway resulting in the expression of IFN-stimulated genes (ISG), which mediate the antiviral state. Has a restricted receptor distribution and therefore restricted targets: is primarily active in epithelial cells and this cell type-selective action is because of the epithelial cell-specific expression of its receptor IFNLR1. Seems not to be essential for early virus-activated host defense in vaginal infection, but plays an important role in Toll-like receptor (TLR)-induced antiviral defense. Plays a significant role in the antiviral immune defense in the intestinal epithelium. Exerts an immunomodulatory effect by up-regulating MHC class I antigen expression. The sequence is that of Interferon lambda-2 (IFNL2) from Homo sapiens (Human).